The chain runs to 235 residues: Large ribosomal subunit protein uL1 (235 aa).

This sequence belongs to the universal ribosomal protein uL1 family. Part of the 50S ribosomal subunit.

In terms of biological role, binds directly to 23S rRNA. The L1 stalk is quite mobile in the ribosome, and is involved in E site tRNA release. Functionally, protein L1 is also a translational repressor protein, it controls the translation of the L11 operon by binding to its mRNA. This chain is Large ribosomal subunit protein uL1, found in Mycobacterium bovis (strain ATCC BAA-935 / AF2122/97).